Consider the following 344-residue polypeptide: MLTLGLESSCDETACAIVNEDKQILANIIASQDIHASYGGVVPELASRAHLHIFPQVINKALQQANLLIEDMDLIAVTQTPGLIGSLSVGVHFGKGIAIGAKKSLIGVNHVEAHLYAAYMAAQNVQFPALGLVVSGAHTAAFFIENPTSYKLIGKTRDDAIGETFDKVGRFLGLPYPAGPLIEKLALEGSEDSYPFSPAKVPNYDFSFSGLKTAVLYAIKGNNSSPRSPAPEISLEKQRDIAASFQKAACTTIAQKLPTIIKEFSCRSILIGGGVAINEYFRSAIQTACNLPVYFPPAKLCSDNAAMIAGLGGENFQKNSSIPEIRICARYQWESVSPFSLASP.

Fe cation-binding residues include His-110 and His-114. Substrate contacts are provided by residues Val-133 to Ala-137, Asp-166, Gly-179, and Asn-278. Asp-303 contacts Fe cation.

This sequence belongs to the KAE1 / TsaD family. The cofactor is Fe(2+).

The protein localises to the cytoplasm. The enzyme catalyses L-threonylcarbamoyladenylate + adenosine(37) in tRNA = N(6)-L-threonylcarbamoyladenosine(37) in tRNA + AMP + H(+). Its function is as follows. Required for the formation of a threonylcarbamoyl group on adenosine at position 37 (t(6)A37) in tRNAs that read codons beginning with adenine. Is involved in the transfer of the threonylcarbamoyl moiety of threonylcarbamoyl-AMP (TC-AMP) to the N6 group of A37, together with TsaE and TsaB. TsaD likely plays a direct catalytic role in this reaction. The protein is tRNA N6-adenosine threonylcarbamoyltransferase of Chlamydia pneumoniae (Chlamydophila pneumoniae).